A 288-amino-acid polypeptide reads, in one-letter code: Diaminopimelate epimerase (288 aa).

Positions 13, 46, and 66 each coordinate substrate. Cys75 (proton donor) is an active-site residue. Substrate is bound by residues 76-77 (GN), Asn166, Asn199, and 217-218 (ER). The active-site Proton acceptor is Cys226. 227-228 (GT) contacts substrate.

It belongs to the diaminopimelate epimerase family. Homodimer.

It is found in the cytoplasm. The catalysed reaction is (2S,6S)-2,6-diaminopimelate = meso-2,6-diaminopimelate. Its pathway is amino-acid biosynthesis; L-lysine biosynthesis via DAP pathway; DL-2,6-diaminopimelate from LL-2,6-diaminopimelate: step 1/1. In terms of biological role, catalyzes the stereoinversion of LL-2,6-diaminopimelate (L,L-DAP) to meso-diaminopimelate (meso-DAP), a precursor of L-lysine and an essential component of the bacterial peptidoglycan. This is Diaminopimelate epimerase from Cupriavidus pinatubonensis (strain JMP 134 / LMG 1197) (Cupriavidus necator (strain JMP 134)).